Consider the following 164-residue polypeptide: Protein DOWNSTREAM OF FLC (164 aa).

Residues 1–23 form the signal peptide; sequence MAKSFVPLIAVLCVLVLPLAAMA. 3 cysteine pairs are disulfide-bonded: cysteine 36/cysteine 107, cysteine 39/cysteine 148, and cysteine 60/cysteine 95.

The protein belongs to the Ole e I family.

The protein resides in the secreted. Its function is as follows. Part of a three-gene cluster containing FLC, UFC and DFC, which is coordinately regulated in response to vernalization. Not regulated by FLX. This Arabidopsis thaliana (Mouse-ear cress) protein is Protein DOWNSTREAM OF FLC (DFC).